A 180-amino-acid polypeptide reads, in one-letter code: MFATRSFCLSSSLFRPAAQLLRPAGRSTLRNVWRRSIATEHLTQTEANSRLASQRVHRPNSPHLTIYEPQLTWYLSSLHRITGCVVAGTLYAFAMGYLVAPLAGYSLDTATISGLIQQVPTWIKVPAKFVISYPLTFHIFNGIRHLIWDTTKELSLKGVYRTGYAVLALSVLTSGYFAMI.

The Mitochondrial matrix segment spans residues 1–82 (MFATRSFCLS…WYLSSLHRIT (82 aa)). The chain crosses the membrane as a helical span at residues 83 to 103 (GCVVAGTLYAFAMGYLVAPLA). Topologically, residues 104–122 (GYSLDTATISGLIQQVPTW) are mitochondrial intermembrane. A helical membrane pass occupies residues 123-143 (IKVPAKFVISYPLTFHIFNGI). His138 is a binding site for heme. At 144-159 (RHLIWDTTKELSLKGV) the chain is on the mitochondrial matrix side. A helical transmembrane segment spans residues 160–180 (YRTGYAVLALSVLTSGYFAMI).

Belongs to the cytochrome b560 family. In terms of assembly, forms part of complex II containing four subunits: a 70 kDa flavoprotein (FP), a 27 kDa iron-sulfur protein (IP), a cytochrome B and a membrane-anchoring protein. Heme is required as a cofactor.

The protein localises to the mitochondrion inner membrane. It functions in the pathway carbohydrate metabolism; tricarboxylic acid cycle. Its function is as follows. Membrane-anchoring subunit of succinate dehydrogenase (SDH) that is involved in complex II of the mitochondrial electron transport chain and is responsible for transferring electrons from succinate to ubiquinone (coenzyme Q). The sequence is that of Succinate dehydrogenase cytochrome B subunit, mitochondrial (sdh3) from Schizosaccharomyces pombe (strain 972 / ATCC 24843) (Fission yeast).